The sequence spans 124 residues: Anamorsin homolog (124 aa).

Residues 1–20 (MSSPAPSTSHNAANSTQAFS) are compositionally biased toward polar residues. Disordered stretches follow at residues 1-39 (MSSPAPSTSHNAANSTQAFSLKTRRPIDEDDLLTAEDRE) and 40-124 (AKST…TDDI). [2Fe-2S] cluster-binding residues include cysteine 49, cysteine 56, cysteine 59, and cysteine 61. The segment at 49 to 61 (CATRRRACKNCTC) is fe-S binding site A. [4Fe-4S] cluster-binding residues include cysteine 86, cysteine 89, cysteine 97, and cysteine 100. 2 short sequence motifs (cx2C motif) span residues 86–89 (CGNC) and 97–100 (CAGC). Positions 86–100 (CGNCAKGDAFRCAGC) are fe-S binding site B.

This sequence belongs to the anamorsin family. In terms of assembly, monomer. [2Fe-2S] cluster is required as a cofactor. The cofactor is [4Fe-4S] cluster.

The protein resides in the cytoplasm. The protein localises to the mitochondrion intermembrane space. Its function is as follows. Component of the cytosolic iron-sulfur (Fe-S) protein assembly (CIA) machinery. Required for the maturation of extramitochondrial Fe-S proteins. Part of an electron transfer chain functioning in an early step of cytosolic Fe-S biogenesis, facilitating the de novo assembly of a [4Fe-4S] cluster on the cytosolic Fe-S scaffold complex. Electrons are transferred from NADPH via a FAD- and FMN-containing diflavin oxidoreductase. Together with the diflavin oxidoreductase, also required for the assembly of the diferric tyrosyl radical cofactor of ribonucleotide reductase (RNR), probably by providing electrons for reduction during radical cofactor maturation in the catalytic small subunit. In Trypanosoma brucei brucei (strain 927/4 GUTat10.1), this protein is Anamorsin homolog.